The primary structure comprises 521 residues: Maturase K (521 aa).

It belongs to the intron maturase 2 family. MatK subfamily.

It localises to the plastid. The protein resides in the chloroplast. In terms of biological role, usually encoded in the trnK tRNA gene intron. Probably assists in splicing its own and other chloroplast group II introns. This Trillium erectum (Beth root) protein is Maturase K.